The chain runs to 72 residues: UPF0352 protein HI_0840 (72 aa).

Belongs to the UPF0352 family.

This chain is UPF0352 protein HI_0840, found in Haemophilus influenzae (strain ATCC 51907 / DSM 11121 / KW20 / Rd).